A 601-amino-acid polypeptide reads, in one-letter code: Protein CT_858 (601 aa).

The protein belongs to the chlamydial CPn_1016/CT_858/TC_0248 family.

This Chlamydia trachomatis serovar D (strain ATCC VR-885 / DSM 19411 / UW-3/Cx) protein is Protein CT_858.